The primary structure comprises 292 residues: Syntenin-2 (292 aa).

2 consecutive PDZ domains span residues 108-187 (EIHL…IRDR) and 192-267 (TVTM…IPTV).

As to quaternary structure, monomer and homodimer. Interacts with SDCBP. Interacts with TM4SF1.

The protein resides in the cytoplasm. The protein localises to the nucleus. It is found in the nucleolus. Its subcellular location is the nucleoplasm. It localises to the cell membrane. The protein resides in the nucleus speckle. Functionally, binds phosphatidylinositol 4,5-bisphosphate (PIP2). May play a role in the organization of nuclear PIP2, cell division and cell survival. This is Syntenin-2 (Sdcbp2) from Mus musculus (Mouse).